Consider the following 649-residue polypeptide: MSHIIELPEMLANQIAAGEVIERPASVVKELVENAIDAGSSQIIIEIEEAGLKKIQITDNGHGIAHDEVELALRRHATSKIKNQADLFRIRTLGFRGEALPSIASVSVLTLLTAVDGASHGTKLVARGGEVEEVIPATSPVGTKVCVEDLFFNTPARLKYMKSQQAELSHIIDIVNRLGLAHPEISFSLISDGKEMTRTAGTGQLRQAIAGIYGLVSAKKMIEIENSDLDFEISGFVSLPELTRANRNYISLFINGRYIKNFLLNRAILDGFGSKLMVGRFPLAVIHIHIDPYLADVNVHPTKQEVRISKEKELMALVSEAIANSLKEQTLIPDALENLAKSTVRNREKVEQTILPLKENTLYYEKTEPSRPSQTEVADYQVELTDEGQDLTLFAKETLDRLTKPAKLHFAERKPANYDQLDHPELDLASIDKAYDKLEREEASSFPELEFFGQMHGTYLFAQGRDGLYIIDQHAAQERVKYEEYRESIGNVDQSQQQLLVPYIFEFPADDALCLKERMPLLEEVGVFLAEYGENQFILREHPIWMAEEEIESGIYEMCDMLLLTKEVSIKKYRAELAIMMSCKRSIKANHRIDDHSARQLLYQLSQCDNPYNCPHGRPVLVHFTKSDMEKMFRRIQENHTSLRELGKY.

This sequence belongs to the DNA mismatch repair MutL/HexB family.

In terms of biological role, this protein is involved in the repair of mismatches in DNA. It is required for dam-dependent methyl-directed DNA mismatch repair. May act as a 'molecular matchmaker', a protein that promotes the formation of a stable complex between two or more DNA-binding proteins in an ATP-dependent manner without itself being part of a final effector complex. The chain is DNA mismatch repair protein MutL from Streptococcus pneumoniae (strain JJA).